We begin with the raw amino-acid sequence, 863 residues long: Protein translocase subunit SecA (863 aa).

ATP contacts are provided by residues Gln88, 106–110 (GEGKT), and Asp496. The segment at 818–842 (EVKTEPVITKKKPARNEPCPCGSGK) is disordered. Cys836, Cys838, Cys847, and Cys848 together coordinate Zn(2+).

Belongs to the SecA family. Monomer and homodimer. Part of the essential Sec protein translocation apparatus which comprises SecA, SecYEG and auxiliary proteins SecDF-YajC and YidC. Zn(2+) serves as cofactor.

Its subcellular location is the cell inner membrane. It localises to the cytoplasm. It carries out the reaction ATP + H2O + cellular proteinSide 1 = ADP + phosphate + cellular proteinSide 2.. Part of the Sec protein translocase complex. Interacts with the SecYEG preprotein conducting channel. Has a central role in coupling the hydrolysis of ATP to the transfer of proteins into and across the cell membrane, serving as an ATP-driven molecular motor driving the stepwise translocation of polypeptide chains across the membrane. The polypeptide is Protein translocase subunit SecA (Nitratiruptor sp. (strain SB155-2)).